The primary structure comprises 147 residues: Ubiquitin-conjugating enzyme E2 4 (147 aa).

The UBC core domain occupies 1–147 (MSLKRINKEL…AKEWTKKYAV (147 aa)). Cys85 (glycyl thioester intermediate) is an active-site residue.

The protein belongs to the ubiquitin-conjugating enzyme family.

It carries out the reaction S-ubiquitinyl-[E1 ubiquitin-activating enzyme]-L-cysteine + [E2 ubiquitin-conjugating enzyme]-L-cysteine = [E1 ubiquitin-activating enzyme]-L-cysteine + S-ubiquitinyl-[E2 ubiquitin-conjugating enzyme]-L-cysteine.. It participates in protein modification; protein ubiquitination. Functionally, E2 ubiquitin-conjugating enzyme that catalyzes the covalent attachment of ubiquitin to other proteins. Mediates the selective degradation of short-lived and abnormal proteins. Mediates ubiquitination of PEX5. The polypeptide is Ubiquitin-conjugating enzyme E2 4 (UBC4) (Candida albicans (Yeast)).